Reading from the N-terminus, the 200-residue chain is Nucleoside triphosphate pyrophosphatase (200 aa).

The active-site Proton acceptor is the Asp-79.

Belongs to the Maf family. It depends on a divalent metal cation as a cofactor.

It is found in the cytoplasm. It carries out the reaction a ribonucleoside 5'-triphosphate + H2O = a ribonucleoside 5'-phosphate + diphosphate + H(+). The catalysed reaction is a 2'-deoxyribonucleoside 5'-triphosphate + H2O = a 2'-deoxyribonucleoside 5'-phosphate + diphosphate + H(+). Functionally, nucleoside triphosphate pyrophosphatase. May have a dual role in cell division arrest and in preventing the incorporation of modified nucleotides into cellular nucleic acids. In Legionella pneumophila (strain Corby), this protein is Nucleoside triphosphate pyrophosphatase.